Consider the following 387-residue polypeptide: MFAFFRSSSNEPDGTLYNKLIEAIKSRNSLEVLALIPKMKNEELAKPNIYGNTPLSLALNKKLEAVCEVLVSRMSDKDISIIETYVEHRETYFTLAAIKGFKGVCENLAPRMSNEAINVINARKHTALTLAADKNLPQVCIKLIPIMFDEVINVTENRHKDSALRKAIWNDLDVVCQMLIPVTSKENINYIDVSDRTLLILAAQKGMKVVCKMLISRMIEDNSLDIINHVISKGELKGESALSLAEKQKGFEDICELLQKSHEEYKEQKQKENEKKCEESQPKKIISEDINKLLNELKDGAYNNKNIIEFSISAKIEKLEKNANDLSEIYTNIQDIINHNKNTKAKLLALEKHLNQIIDAQTINTEQQISLEALGDVSVEFSNSRGV.

5 ANK repeats span residues 50 to 79 (YGNT…DKDI), 88 to 119 (HRET…AINV), 123 to 154 (RKHT…VINV), 159 to 188 (HKDS…KENI), and 210 to 239 (VCKM…LKGE). Coiled-coil stretches lie at residues 251-278 (FEDI…KKCE) and 311-352 (SISA…ALEK).

This Rickettsia bellii (strain RML369-C) protein is Putative ankyrin repeat protein RBE_0984.